The primary structure comprises 64 residues: Small ribosomal subunit protein bS21 (64 aa).

It belongs to the bacterial ribosomal protein bS21 family.

The chain is Small ribosomal subunit protein bS21 from Anaeromyxobacter dehalogenans (strain 2CP-1 / ATCC BAA-258).